Here is a 441-residue protein sequence, read N- to C-terminus: Trigger factor (441 aa).

The PPIase FKBP-type domain occupies 175–257 (GDFISLSLHV…VNAVIEVVAP (83 aa)).

Belongs to the FKBP-type PPIase family. Tig subfamily.

It localises to the cytoplasm. The enzyme catalyses [protein]-peptidylproline (omega=180) = [protein]-peptidylproline (omega=0). In terms of biological role, involved in protein export. Acts as a chaperone by maintaining the newly synthesized protein in an open conformation. Functions as a peptidyl-prolyl cis-trans isomerase. The polypeptide is Trigger factor (Chlamydia abortus (strain DSM 27085 / S26/3) (Chlamydophila abortus)).